A 505-amino-acid polypeptide reads, in one-letter code: MSEKLWGGRFSTDITDDVLRYTETASVDSRMLEHDLWQNIAHVLMLGRAGINTEPDTKALLAGLLDMESSRADGGLQLDVRQEDVHLNTEFMLIERIGPVGGRMHTARSRNDQVQTDARMVTREWLLDASEELLMFVQDLLGCPESEREAVLPGYTHSQAAQPISVAFWKAAHAQALLRDASRLMDAWKRININPLGACALAGTTFALDRDYTSRLLGFDAPMVNALDATSTRDWTVEVAGAAASGAVNLSRMQEEIVTWSSNEYALAEVHDSFATGSSIMPQKKNPVVAELARGKSGRAVGALVQLLVMEKSVGLGYSCDLQEDKPVYWGALDTYLDTIRLCRRQNLHTAFDGARGRALCWDNFSTATEIANILVSRFDVPFRTAHRITGDLVNAALGGGHTLRNVAFTTTFLREEHDIDISEVDMKQICDPLHTLRSYISAGSTGPTRVSEQQEQGLADVTDRLAEIRQARTRLWEAKAECLRAARSVVGGVSVPELAMEVGV.

This sequence belongs to the lyase 1 family. Argininosuccinate lyase subfamily.

The protein localises to the cytoplasm. The catalysed reaction is 2-(N(omega)-L-arginino)succinate = fumarate + L-arginine. Its pathway is amino-acid biosynthesis; L-arginine biosynthesis; L-arginine from L-ornithine and carbamoyl phosphate: step 3/3. The polypeptide is Argininosuccinate lyase (Rhodococcoides fascians (Rhodococcus fascians)).